The sequence spans 274 residues: 2,3,4,5-tetrahydropyridine-2,6-dicarboxylate N-succinyltransferase (274 aa).

Residues arginine 106 and aspartate 143 each contribute to the substrate site.

The protein belongs to the transferase hexapeptide repeat family. In terms of assembly, homotrimer.

It localises to the cytoplasm. The enzyme catalyses (S)-2,3,4,5-tetrahydrodipicolinate + succinyl-CoA + H2O = (S)-2-succinylamino-6-oxoheptanedioate + CoA. The protein operates within amino-acid biosynthesis; L-lysine biosynthesis via DAP pathway; LL-2,6-diaminopimelate from (S)-tetrahydrodipicolinate (succinylase route): step 1/3. The chain is 2,3,4,5-tetrahydropyridine-2,6-dicarboxylate N-succinyltransferase from Rickettsia rickettsii (strain Sheila Smith).